Reading from the N-terminus, the 131-residue chain is UPF0102 protein YraN (131 aa).

The span at 1–19 shows a compositional bias: polar residues; that stretch reads MATVPTRSGSPRQLTTKQT. The interval 1–20 is disordered; it reads MATVPTRSGSPRQLTTKQTG.

Belongs to the UPF0102 family.

The protein is UPF0102 protein YraN of Escherichia fergusonii (strain ATCC 35469 / DSM 13698 / CCUG 18766 / IAM 14443 / JCM 21226 / LMG 7866 / NBRC 102419 / NCTC 12128 / CDC 0568-73).